The primary structure comprises 80 residues: ALRGFGVIDSIKTQIEAICNQTVSCADILTVAARDSVVALGGPSWTVPLGRRDSIDANEAEANSDLPGFNSSRSELEAAF.

The tract at residues 56–80 (DANEAEANSDLPGFNSSRSELEAAF) is disordered. Pro67 is a binding site for substrate. The N-linked (GlcNAc...) asparagine glycan is linked to Asn70.

This sequence belongs to the peroxidase family. Classical plant (class III) peroxidase subfamily. Ca(2+) serves as cofactor. Requires heme b as cofactor.

The enzyme catalyses 2 a phenolic donor + H2O2 = 2 a phenolic radical donor + 2 H2O. In terms of biological role, removal of H(2)O(2), oxidation of toxic reductants, biosynthesis and degradation of lignin, suberization, auxin catabolism, response to environmental stresses such as wounding, pathogen attack and oxidative stress. These functions might be dependent on each isozyme/isoform in each plant tissue. The polypeptide is Peroxidase (Triticum aestivum (Wheat)).